The chain runs to 120 residues: Large ribosomal subunit protein bL21 (120 aa).

Belongs to the bacterial ribosomal protein bL21 family. Part of the 50S ribosomal subunit. Contacts protein L20.

In terms of biological role, this protein binds to 23S rRNA in the presence of protein L20. The sequence is that of Large ribosomal subunit protein bL21 from Roseiflexus sp. (strain RS-1).